A 338-amino-acid chain; its full sequence is Glycerol-3-phosphate dehydrogenase [NAD(P)+] (338 aa).

3 residues coordinate NADPH: Ser13, Trp14, and Lys108. Sn-glycerol 3-phosphate-binding residues include Lys108, Gly139, and Ser141. Ala143 contacts NADPH. Sn-glycerol 3-phosphate is bound by residues Lys194, Asp247, Ser257, Arg258, and Asn259. Lys194 serves as the catalytic Proton acceptor. Residue Arg258 coordinates NADPH. 2 residues coordinate NADPH: Val282 and Glu284.

The protein resides in the cytoplasm. The enzyme catalyses sn-glycerol 3-phosphate + NAD(+) = dihydroxyacetone phosphate + NADH + H(+). It catalyses the reaction sn-glycerol 3-phosphate + NADP(+) = dihydroxyacetone phosphate + NADPH + H(+). It functions in the pathway membrane lipid metabolism; glycerophospholipid metabolism. Catalyzes the reduction of the glycolytic intermediate dihydroxyacetone phosphate (DHAP) to sn-glycerol 3-phosphate (G3P), the key precursor for phospholipid synthesis. In Streptococcus pyogenes serotype M6 (strain ATCC BAA-946 / MGAS10394), this protein is Glycerol-3-phosphate dehydrogenase [NAD(P)+].